A 431-amino-acid polypeptide reads, in one-letter code: Phosphoribosylamine--glycine ligase (431 aa).

Positions 107–315 (RWLMEEYKIP…LVEIGEEIVD (209 aa)) constitute an ATP-grasp domain. An ATP-binding site is contributed by 134–193 (IDDFGRPVVVKPLGLTGGKGVKVVGYQLKDNEEAKAYAEELIKRDGKVLIEERTDGVEFT). Positions 273, 285, and 287 each coordinate Mg(2+). 3 residues coordinate Mn(2+): Gln273, Glu285, and Asn287.

This sequence belongs to the GARS family. The cofactor is Mg(2+). It depends on Mn(2+) as a cofactor.

The catalysed reaction is 5-phospho-beta-D-ribosylamine + glycine + ATP = N(1)-(5-phospho-beta-D-ribosyl)glycinamide + ADP + phosphate + H(+). Its pathway is purine metabolism; IMP biosynthesis via de novo pathway; N(1)-(5-phospho-D-ribosyl)glycinamide from 5-phospho-alpha-D-ribose 1-diphosphate: step 2/2. In Thermococcus kodakarensis (strain ATCC BAA-918 / JCM 12380 / KOD1) (Pyrococcus kodakaraensis (strain KOD1)), this protein is Phosphoribosylamine--glycine ligase.